We begin with the raw amino-acid sequence, 284 residues long: Homeobox protein six1b (284 aa).

The homeobox DNA-binding region spans Gly124–Glu183. Positions Gln167–Met238 are disordered. Residues Asp179–Ser190 are compositionally biased toward basic and acidic residues. 2 stretches are compositionally biased toward polar residues: residues Glu191–Ser204 and Pro226–Met238.

Belongs to the SIX/Sine oculis homeobox family. As to quaternary structure, interacts with eya1.

It is found in the nucleus. Its subcellular location is the cytoplasm. Functionally, transcription factor that is involved in the regulation of cell proliferation, apoptosis and embryonic development. Depending on context, functions as a transcriptional repressor or activator. Transcriptional activation is enhanced by eya1 (in vitro). Plays an important role in the development of the inner ear, where it promotes hair cell proliferation and inhibits proliferation of neural progenitor cells. Required for normal myogenesis. Plays a role in the development of fast muscle fibers throughout the body, as well as the development of craniofacial muscles. Required for normal expression of myod1 and myog during myogenesis. This chain is Homeobox protein six1b (six1b), found in Danio rerio (Zebrafish).